The following is a 686-amino-acid chain: Chromatin modification-related protein EAF1 (686 aa).

A disordered region spans residues 71 to 97 (QMKRRQNDHHNQGPPPKVQKSTVDSLK). The HSA domain maps to 202 to 280 (FKFIRKSKKK…DKSIIRNLPV (79 aa)). The region spanning 354–418 (IPTIWLPEDD…FERYIQLNDK (65 aa)) is the Myb-like domain. 3 disordered regions span residues 493–517 (RKST…RIPT), 544–617 (ARMV…QQRR), and 657–686 (QQGY…PNNA). Over residues 497–506 (AELQANQNVT) the composition is skewed to polar residues. Residues 554 to 568 (APAPAPAPPPPPPPK) are compositionally biased toward pro residues. Over residues 574–588 (TTPNGTPLTNEQIQH) the composition is skewed to polar residues. A compositionally biased stretch (low complexity) spans 599–613 (LQQQQQQQQQQQHQQ). Residues 671 to 686 (QKNQTASPMSGSPNNA) are compositionally biased toward polar residues.

Belongs to the EAF1 family. As to quaternary structure, component of the NuA4 histone acetyltransferase complex.

Its subcellular location is the nucleus. In terms of biological role, component of the NuA4 histone acetyltransferase complex which is involved in transcriptional activation of selected genes principally by acetylation of nucleosomal histone H4 and H2A. The NuA4 complex is also involved in DNA repair. The chain is Chromatin modification-related protein EAF1 (VID21) from Candida albicans (strain SC5314 / ATCC MYA-2876) (Yeast).